The sequence spans 375 residues: Actin-binding Rho-activating protein (375 aa).

The disordered stretch occupies residues 37–101 (ANENSTRQAQ…ATEVSHIKRK (65 aa)). Residues 80-101 (PDGDREGRGSEEATEVSHIKRK) are compositionally biased toward basic and acidic residues. Residues Ser-150 and Ser-182 each carry the phosphoserine modification. Residues 175–197 (EPKWKSDSIDTEDSGYGGDMEER) are disordered. Actin-binding stretches follow at residues 193–293 (DMEE…AERA) and 294–375 (KRAE…TLLE). Interaction with actin regions lie at residues 234 to 279 (SQVD…GDEG) and 346 to 375 (MRAR…TLLE).

As to quaternary structure, binds F-actin and ABLIM1, ABLIM2 and ABLIM3. Interaction with ABLIM2 and ABLIM3 enhances activity. In terms of tissue distribution, predominantly expressed in heart and skeletal muscle, and expressed at lower levels in adrenal gland, brain, kidney, liver, and testis.

The protein resides in the cytoplasm. Its subcellular location is the myofibril. It is found in the sarcomere. The protein localises to the cytoskeleton. Its function is as follows. Acts as an activator of serum response factor (SRF)-dependent transcription possibly by inducing nuclear translocation of MKL1 or MKL2 and through a mechanism requiring Rho-actin signaling. This Rattus norvegicus (Rat) protein is Actin-binding Rho-activating protein.